Reading from the N-terminus, the 523-residue chain is GMP synthase [glutamine-hydrolyzing] (523 aa).

The Glutamine amidotransferase type-1 domain maps to 8–205; the sequence is KILILDFGSQ…VVNICGCETK (198 aa). Cysteine 85 acts as the Nucleophile in catalysis. Active-site residues include histidine 179 and glutamate 181. The 193-residue stretch at 206–398 folds into the GMPS ATP-PPase domain; the sequence is WTAENIIEDA…LGLPAEMINR (193 aa). 233–239 provides a ligand contact to ATP; it reads SGGVDSS.

In terms of assembly, homodimer.

It catalyses the reaction XMP + L-glutamine + ATP + H2O = GMP + L-glutamate + AMP + diphosphate + 2 H(+). It participates in purine metabolism; GMP biosynthesis; GMP from XMP (L-Gln route): step 1/1. Its function is as follows. Catalyzes the synthesis of GMP from XMP. The polypeptide is GMP synthase [glutamine-hydrolyzing] (Haemophilus influenzae (strain 86-028NP)).